We begin with the raw amino-acid sequence, 144 residues long: TSC22 domain family protein 1 (144 aa).

Residues 77–98 (LKEQIKELIEKNSQLEQENNLL) are leucine-zipper. Positions 109–144 (QFQAQLQTGSPPATTQPQGSTQPPAQPASQGSGPTA) are disordered.

It belongs to the TSC-22/Dip/Bun family. In terms of assembly, forms homodimers. Forms a heterodimer with TSC22D4/THG1. Interacts with histone H1-2. Interacts with GNL3.

The protein resides in the cytoplasm. It is found in the nucleus. The protein localises to the mitochondrion. Functionally, transcriptional repressor. Plays a role in the repression of hematopoietic precursor cell growth. Promotes IL2 deprivation-induced apoptosis in T-lymphocytes, via repression of TSC22D3/GILZ transcription and activation of the caspase cascade. Positively regulates cell death in response to TGFB3 during mammary gland involution. This is TSC22 domain family protein 1 from Bathyergus suillus (Cape dune mole rat).